The following is a 169-amino-acid chain: Transcription antitermination protein NusB (169 aa).

Positions 1-23 (MADSKKPAIKKPVPKGDRKANRR) are disordered.

The protein belongs to the NusB family.

Its function is as follows. Involved in transcription antitermination. Required for transcription of ribosomal RNA (rRNA) genes. Binds specifically to the boxA antiterminator sequence of the ribosomal RNA (rrn) operons. The chain is Transcription antitermination protein NusB from Rhodopseudomonas palustris (strain HaA2).